The chain runs to 284 residues: Bifunctional protein FolD 1 (284 aa).

NADP(+) is bound by residues 164-166, serine 189, and isoleucine 230; that span reads GRS.

The protein belongs to the tetrahydrofolate dehydrogenase/cyclohydrolase family. As to quaternary structure, homodimer.

The enzyme catalyses (6R)-5,10-methylene-5,6,7,8-tetrahydrofolate + NADP(+) = (6R)-5,10-methenyltetrahydrofolate + NADPH. It catalyses the reaction (6R)-5,10-methenyltetrahydrofolate + H2O = (6R)-10-formyltetrahydrofolate + H(+). Its pathway is one-carbon metabolism; tetrahydrofolate interconversion. Catalyzes the oxidation of 5,10-methylenetetrahydrofolate to 5,10-methenyltetrahydrofolate and then the hydrolysis of 5,10-methenyltetrahydrofolate to 10-formyltetrahydrofolate. The sequence is that of Bifunctional protein FolD 1 from Rubrobacter xylanophilus (strain DSM 9941 / JCM 11954 / NBRC 16129 / PRD-1).